The sequence spans 38 residues: Large ribosomal subunit protein bL36 (38 aa).

Belongs to the bacterial ribosomal protein bL36 family.

This is Large ribosomal subunit protein bL36 from Chloroflexus aurantiacus (strain ATCC 29366 / DSM 635 / J-10-fl).